The primary structure comprises 166 residues: Methylmalonyl-CoA epimerase, mitochondrial (166 aa).

A mitochondrion-targeting transit peptide spans 1 to 23 (MFKQLIKTTLTNSRSFSTNTGSG). Residues 37-166 (KLNHVAIATP…NGVLVELEEK (130 aa)) form the VOC domain. Co(2+)-binding residues include H40, H112, and E162.

Belongs to the methylmalonyl-CoA epimerase family.

It localises to the mitochondrion. It catalyses the reaction (R)-methylmalonyl-CoA = (S)-methylmalonyl-CoA. Methylmalonyl-CoA epimerase involved in propionyl-CoA metabolism. In Dictyostelium discoideum (Social amoeba), this protein is Methylmalonyl-CoA epimerase, mitochondrial (mcee).